The primary structure comprises 330 residues: PTS system mannose-specific EIIAB component (330 aa).

Residues 2–130 (GIGIIIASHG…NIIKESKDGI (129 aa)) enclose the PTS EIIA type-4 domain. The active-site Tele-phosphohistidine intermediate; for EIIA activity is the His10. Residue His10 is modified to Phosphohistidine; by HPr. A hinge region spans residues 143 to 161 (TAATEKVVNALQGAIPAGT). Residues 166 to 330 (GKLKINLARV…FELIQKANIK (165 aa)) form the PTS EIIB type-4 domain. His181 acts as the Pros-phosphohistidine intermediate; for EIIB activity in catalysis. Phosphohistidine; by EIIA is present on His181.

As to quaternary structure, homodimer.

It is found in the cytoplasm. The protein resides in the cell membrane. The catalysed reaction is D-mannose(out) + N(pros)-phospho-L-histidyl-[protein] = D-mannose 6-phosphate(in) + L-histidyl-[protein]. Functionally, the phosphoenolpyruvate-dependent sugar phosphotransferase system (sugar PTS), a major carbohydrate active transport system, catalyzes the phosphorylation of incoming sugar substrates concomitantly with their translocation across the cell membrane. The enzyme II ManXYZ PTS system is involved in mannose transport. In Streptococcus pyogenes serotype M6 (strain ATCC BAA-946 / MGAS10394), this protein is PTS system mannose-specific EIIAB component.